The following is a 389-amino-acid chain: Gibberellin 20 oxidase 2 (389 aa).

The segment covering 1–17 (MVAEHPTPPQPHQPPPM) has biased composition (pro residues). The tract at residues 1-23 (MVAEHPTPPQPHQPPPMDSTAGS) is disordered. The Fe2OG dioxygenase domain occupies 224 to 324 (DSSSIMRCNY…RRSLAFFLCP (101 aa)). 3 residues coordinate Fe cation: H249, D251, and H305. R315 is an active-site residue.

It belongs to the iron/ascorbate-dependent oxidoreductase family. GA20OX subfamily. The cofactor is Fe cation. It depends on L-ascorbate as a cofactor.

It carries out the reaction gibberellin A12 + 2 2-oxoglutarate + 3 O2 + H(+) = gibberellin A9 + 2 succinate + 3 CO2 + 2 H2O. The enzyme catalyses gibberellin A53 + 2 2-oxoglutarate + 3 O2 + H(+) = gibberellin A20 + 2 succinate + 3 CO2 + 2 H2O. Functionally, key oxidase enzyme in the biosynthesis of gibberellin that catalyzes the conversion of GA53 to GA20 via a three-step oxidation at C-20 of the GA skeleton. The polypeptide is Gibberellin 20 oxidase 2 (20ox2) (Oryza sativa subsp. indica (Rice)).